Consider the following 69-residue polypeptide: DWECLPLHSSCDNDCVCCKNHHCHCPYSNVSKLEKWLPEWAKIPDALKRCSCQRNDKDGKINTCDKYKN.

Residues 1 to 68 (DWECLPLHSS…GKINTCDKYK (68 aa)) enclose the Oxytoxin-type inhibitor cystine knot (ICK) domain. 5 disulfides stabilise this stretch: cysteine 4/cysteine 18, cysteine 11/cysteine 23, cysteine 15/cysteine 64, cysteine 17/cysteine 52, and cysteine 25/cysteine 50. Residue asparagine 69 is modified to Asparagine amide.

The protein belongs to the spiderine family. Spiderine subfamily. Expressed by the venom gland.

It localises to the secreted. In terms of biological role, weak blocker of vertebrate P/Q-, N- and L-type voltage-gated calcium channels (Cav1 and Cav2). Is both paralytic and lethal when injected into lepidopteran larvae. Is not toxic to mice. The chain is Omega-oxotoxin-Ol1a from Oxyopes lineatus (Lynx spider).